The following is a 602-amino-acid chain: NAD-reducing hydrogenase HoxS subunit alpha (602 aa).

Residue 219-228 (GRGGAGFSTG) participates in NAD(+) binding. Position 332–379 (332–379 (GAGAYICGDESALIESCEGKRGTPRVKPPFPVQQGYLGKPTSVNNVET)) interacts with FMN. [4Fe-4S] cluster contacts are provided by cysteine 499, cysteine 502, cysteine 505, and cysteine 545.

It belongs to the complex I 51 kDa subunit family. As to quaternary structure, tetramer of an alpha and a gamma subunits (flavin-containing dimer), and a delta and a nickel-containing beta subunit (hydrogenase dimer). Requires FMN as cofactor. [4Fe-4S] cluster is required as a cofactor.

It is found in the cytoplasm. The enzyme catalyses H2 + NAD(+) = NADH + H(+). Its function is as follows. Subunits alpha and gamma of HoxS constitute an NADH--oxidoreductase. In Cupriavidus necator (strain ATCC 17699 / DSM 428 / KCTC 22496 / NCIMB 10442 / H16 / Stanier 337) (Ralstonia eutropha), this protein is NAD-reducing hydrogenase HoxS subunit alpha (hoxF).